Reading from the N-terminus, the 364-residue chain is MQGFRNHTVLQLELTQPRLLVIGPNGIGKSNLLEAVELLGSLRSHRCSNDRDLIQWDTPQALIRADVGDGDRLELELRRQGGRQARRNGKLLDRQLDLIGPLRCIGFSALDLDLVRGEPALRRQWLDRVVLQLEPVYADLMARLNRLLRQRSQLWRQRQISSGERHALLEAFDVQMALVSTRIHRRRQRALHRLEPIAQRWQTHLSGGTETLELHYKPGSRLDGEDAEEPWRLAIEEQLRQQREEEERLGSCRVGPHRDEIALLLGGSPARRFGSAGQQRSLVLGLKLAELELVTQLCGEPPLLLLDDVLAELDPTRQQLLLEAVGESHQCLVSATHLEGFGGGWQQQAQILGARELRPDLKIG.

Residue Gly23–Ser30 coordinates ATP.

It belongs to the RecF family.

It localises to the cytoplasm. Its function is as follows. The RecF protein is involved in DNA metabolism; it is required for DNA replication and normal SOS inducibility. RecF binds preferentially to single-stranded, linear DNA. It also seems to bind ATP. The protein is DNA replication and repair protein RecF of Synechococcus sp. (strain CC9605).